The following is a 120-amino-acid chain: Small ribosomal subunit protein eS25 (120 aa).

The tract at residues 1–32 (MPPKAGQTKKAKMEAANKGAKKTTKKWSKGQS) is disordered. The segment covering 19–28 (GAKKTTKKWS) has biased composition (basic residues).

The protein belongs to the eukaryotic ribosomal protein eS25 family.

The chain is Small ribosomal subunit protein eS25 (RPS25) from Leishmania infantum.